Reading from the N-terminus, the 889-residue chain is Valine--tRNA ligase (889 aa).

The 'HIGH' region signature appears at 50-60 (PNVTGKLHLGH). The short motif at 532 to 536 (KMSKS) is the 'KMSKS' region element. Lys535 is an ATP binding site. Positions 816 to 889 (LAELVDLDEE…QRLVDIKAEA (74 aa)) form a coiled coil.

It belongs to the class-I aminoacyl-tRNA synthetase family. ValS type 1 subfamily. Monomer.

Its subcellular location is the cytoplasm. It catalyses the reaction tRNA(Val) + L-valine + ATP = L-valyl-tRNA(Val) + AMP + diphosphate. Its function is as follows. Catalyzes the attachment of valine to tRNA(Val). As ValRS can inadvertently accommodate and process structurally similar amino acids such as threonine, to avoid such errors, it has a 'posttransfer' editing activity that hydrolyzes mischarged Thr-tRNA(Val) in a tRNA-dependent manner. The polypeptide is Valine--tRNA ligase (Lactiplantibacillus plantarum (strain ATCC BAA-793 / NCIMB 8826 / WCFS1) (Lactobacillus plantarum)).